We begin with the raw amino-acid sequence, 790 residues long: Endonuclease MutS2 (790 aa).

334-341 (GPNTGGKT) is a binding site for ATP. One can recognise a Smr domain in the interval 715–790 (IDVRGQNLEE…GMGVTIVHLK (76 aa)).

This sequence belongs to the DNA mismatch repair MutS family. MutS2 subfamily. As to quaternary structure, homodimer. Binds to stalled ribosomes, contacting rRNA.

Endonuclease that is involved in the suppression of homologous recombination and thus may have a key role in the control of bacterial genetic diversity. In terms of biological role, acts as a ribosome collision sensor, splitting the ribosome into its 2 subunits. Detects stalled/collided 70S ribosomes which it binds and splits by an ATP-hydrolysis driven conformational change. Acts upstream of the ribosome quality control system (RQC), a ribosome-associated complex that mediates the extraction of incompletely synthesized nascent chains from stalled ribosomes and their subsequent degradation. Probably generates substrates for RQC. This Alkaliphilus oremlandii (strain OhILAs) (Clostridium oremlandii (strain OhILAs)) protein is Endonuclease MutS2.